A 260-amino-acid chain; its full sequence is Ribonuclease HII (260 aa).

The region spanning 70–260 is the RNase H type-2 domain; the sequence is QAIAGIDEVG…PIKSMLKEKN (191 aa). A divalent metal cation contacts are provided by Asp76, Glu77, and Asp171.

The protein belongs to the RNase HII family. Requires Mn(2+) as cofactor. The cofactor is Mg(2+).

It is found in the cytoplasm. It carries out the reaction Endonucleolytic cleavage to 5'-phosphomonoester.. In terms of biological role, endonuclease that specifically degrades the RNA of RNA-DNA hybrids. This chain is Ribonuclease HII, found in Streptococcus mutans serotype c (strain ATCC 700610 / UA159).